The primary structure comprises 1252 residues: DNA-directed RNA polymerase subunit beta (1252 aa).

The protein belongs to the RNA polymerase beta chain family. In terms of assembly, the RNAP catalytic core consists of 2 alpha, 1 beta, 1 beta' and 1 omega subunit. When a sigma factor is associated with the core the holoenzyme is formed, which can initiate transcription.

The enzyme catalyses RNA(n) + a ribonucleoside 5'-triphosphate = RNA(n+1) + diphosphate. Functionally, DNA-dependent RNA polymerase catalyzes the transcription of DNA into RNA using the four ribonucleoside triphosphates as substrates. The sequence is that of DNA-directed RNA polymerase subunit beta from Chlamydia felis (strain Fe/C-56) (Chlamydophila felis).